We begin with the raw amino-acid sequence, 300 residues long: Elongator complex protein 5 (300 aa).

Residue Ser-252 is modified to Phosphoserine. Residues Gln-264–Ile-300 are disordered. Residues Asp-284–Ile-300 show a composition bias toward acidic residues.

This sequence belongs to the ELP5 family. As to quaternary structure, component of the elongator complex which consists of ELP1, ELP2, ELP3, ELP4, ELP5 and ELP6; in the complex, is required for optimal binding of ELP3 to ELP4. Post-translationally, tyrosine-phosphorylated. Ubiquitously expressed with high levels in heart, brain, liver, skeletal muscle and testis.

The protein localises to the nucleus. The protein resides in the cytoplasm. It functions in the pathway tRNA modification; 5-methoxycarbonylmethyl-2-thiouridine-tRNA biosynthesis. In terms of biological role, component of the elongator complex which is required for multiple tRNA modifications, including mcm5U (5-methoxycarbonylmethyl uridine), mcm5s2U (5-methoxycarbonylmethyl-2-thiouridine), and ncm5U (5-carbamoylmethyl uridine). The elongator complex catalyzes formation of carboxymethyluridine in the wobble base at position 34 in tRNAs. Involved in cell migration. This chain is Elongator complex protein 5, found in Homo sapiens (Human).